The primary structure comprises 390 residues: S-adenosylmethionine synthase 1 (390 aa).

Residue E9 participates in Mg(2+) binding. Position 15 (H15) interacts with ATP. E43 lines the K(+) pocket. L-methionine is bound by residues E56 and Q99. Residues 167-169 (DGK), 235-238 (SGRF), D246, 252-253 (RK), A269, K273, and K277 contribute to the ATP site. An L-methionine-binding site is contributed by D246. K277 provides a ligand contact to L-methionine.

This sequence belongs to the AdoMet synthase family. As to quaternary structure, homotetramer. Mn(2+) serves as cofactor. It depends on Mg(2+) as a cofactor. Co(2+) is required as a cofactor. Requires K(+) as cofactor.

It is found in the cytoplasm. It carries out the reaction L-methionine + ATP + H2O = S-adenosyl-L-methionine + phosphate + diphosphate. Its pathway is amino-acid biosynthesis; S-adenosyl-L-methionine biosynthesis; S-adenosyl-L-methionine from L-methionine: step 1/1. Functionally, catalyzes the formation of S-adenosylmethionine from methionine and ATP. The reaction comprises two steps that are both catalyzed by the same enzyme: formation of S-adenosylmethionine (AdoMet) and triphosphate, and subsequent hydrolysis of the triphosphate. This chain is S-adenosylmethionine synthase 1 (SAM1), found in Actinidia chinensis var. chinensis (Chinese soft-hair kiwi).